A 231-amino-acid polypeptide reads, in one-letter code: Heptaprenylglyceryl phosphate synthase (231 aa).

Position 12 (lysine 12) interacts with sn-glycerol 1-phosphate. Residues aspartate 14 and threonine 40 each coordinate Mg(2+). Residues 159–164, glycine 189, and 209–210 contribute to the sn-glycerol 1-phosphate site; these read YMEYSG and GN.

Belongs to the GGGP/HepGP synthase family. Group I subfamily. As to quaternary structure, homodimer. It depends on Mg(2+) as a cofactor.

It catalyses the reaction sn-glycerol 1-phosphate + all-trans-heptaprenyl diphosphate = 3-heptaprenyl-sn-glycero-1-phosphate + diphosphate. It functions in the pathway membrane lipid metabolism; glycerophospholipid metabolism. Its function is as follows. Prenyltransferase that catalyzes in vivo the transfer of the heptaprenyl moiety of heptaprenyl pyrophosphate (HepPP; 35 carbon atoms) to the C3 hydroxyl of sn-glycerol-1-phosphate (G1P), producing heptaprenylglyceryl phosphate (HepGP). This reaction is an ether-bond-formation step in the biosynthesis of archaea-type G1P-based membrane lipids found in Bacillales. The protein is Heptaprenylglyceryl phosphate synthase of Anoxybacillus flavithermus (strain DSM 21510 / WK1).